A 317-amino-acid chain; its full sequence is Ciliary microtubule inner protein 2A (317 aa).

A disordered region spans residues 131 to 153 (TPDTPHPPCPPGRKGDSRDLGHP).

It belongs to the CIMIP2 family. As to quaternary structure, microtubule inner protein component of sperm flagellar doublet microtubules.

Its subcellular location is the cytoplasm. The protein resides in the cytoskeleton. It localises to the flagellum axoneme. Its function is as follows. Microtubule inner protein (MIP) part of the dynein-decorated doublet microtubules (DMTs) in flagellum axoneme. Binds to the intra-tubulin interfaces. This is Ciliary microtubule inner protein 2A from Homo sapiens (Human).